A 212-amino-acid polypeptide reads, in one-letter code: Protein-L-isoaspartate O-methyltransferase (212 aa).

The active site involves serine 60.

It belongs to the methyltransferase superfamily. L-isoaspartyl/D-aspartyl protein methyltransferase family.

It is found in the cytoplasm. It carries out the reaction [protein]-L-isoaspartate + S-adenosyl-L-methionine = [protein]-L-isoaspartate alpha-methyl ester + S-adenosyl-L-homocysteine. In terms of biological role, catalyzes the methyl esterification of L-isoaspartyl residues in peptides and proteins that result from spontaneous decomposition of normal L-aspartyl and L-asparaginyl residues. It plays a role in the repair and/or degradation of damaged proteins. The sequence is that of Protein-L-isoaspartate O-methyltransferase from Methanococcus maripaludis (strain C6 / ATCC BAA-1332).